The following is a 186-amino-acid chain: Proline-rich protein 3 (186 aa).

A disordered region spans residues 1-97 (MPKRKKQNQP…LGPRSSPYGR (97 aa)). Composition is skewed to pro residues over residues 33–44 (MGPPSLLGPPPM) and 67–79 (MIPP…PPPR). The C3H1-type zinc-finger motif lies at 153 to 181 (KSDRPVCRHFSKKGHCRYEDHCAFYHPGV).

This Rattus norvegicus (Rat) protein is Proline-rich protein 3 (Prr3).